Here is a 530-residue protein sequence, read N- to C-terminus: Glucose-6-phosphate isomerase (530 aa).

Residue E356 is the Proton donor of the active site. Residues H387 and K502 contribute to the active site.

The protein belongs to the GPI family.

The protein resides in the cytoplasm. It catalyses the reaction alpha-D-glucose 6-phosphate = beta-D-fructose 6-phosphate. It participates in carbohydrate biosynthesis; gluconeogenesis. The protein operates within carbohydrate degradation; glycolysis; D-glyceraldehyde 3-phosphate and glycerone phosphate from D-glucose: step 2/4. Functionally, catalyzes the reversible isomerization of glucose-6-phosphate to fructose-6-phosphate. In Borreliella afzelii (strain PKo) (Borrelia afzelii), this protein is Glucose-6-phosphate isomerase.